The sequence spans 141 residues: Hemoglobin subunit alpha-D/D' (141 aa).

In terms of domain architecture, Globin spans methionine 1–arginine 141. Positions 58 and 87 each coordinate heme b.

It belongs to the globin family. As to quaternary structure, heterotetramer of two alpha-D chains and two beta chains. In terms of tissue distribution, red blood cells.

Involved in oxygen transport from the lung to the various peripheral tissues. This Gyps rueppelli (Rueppell's griffon) protein is Hemoglobin subunit alpha-D/D' (HBAD).